The following is an 85-amino-acid chain: Large ribosomal subunit protein bL27 (85 aa).

The disordered stretch occupies residues 1-22 (MAHKKAAGSTRNGRDSESKRLG).

Belongs to the bacterial ribosomal protein bL27 family.

The polypeptide is Large ribosomal subunit protein bL27 (Pseudoalteromonas translucida (strain TAC 125)).